The sequence spans 108 residues: Vacuolar ATPase assembly integral membrane protein VMA21 (108 aa).

Topologically, residues 1-34 (MASRRSAAAKKEDFSFEAAATQSAHEAQEGFPSS) are cytoplasmic. Residues 35 to 55 (VIIKLVLVTVAMICAPLGTYF) traverse the membrane as a helical segment. Over 56 to 68 (GTLNTICGGDSSY) the chain is Lumenal. Residues 69-89 (AGALAAISVNVVLIIYLIIAA) traverse the membrane as a helical segment. Over 90–108 (REDTGESEEERKGKEGKEE) the chain is Cytoplasmic.

The protein belongs to the VMA21 family.

It localises to the endoplasmic reticulum membrane. The protein localises to the endoplasmic reticulum-Golgi intermediate compartment membrane. It is found in the cytoplasmic vesicle. The protein resides in the COPII-coated vesicle membrane. In terms of biological role, required for the assembly of the V0 complex of the vacuolar ATPase (V-ATPase) in the endoplasmic reticulum. The sequence is that of Vacuolar ATPase assembly integral membrane protein VMA21 from Ajellomyces capsulatus (strain NAm1 / WU24) (Darling's disease fungus).